A 75-amino-acid chain; its full sequence is Large ribosomal subunit protein bL31 (75 aa).

Belongs to the bacterial ribosomal protein bL31 family. Type A subfamily. As to quaternary structure, part of the 50S ribosomal subunit.

Binds the 23S rRNA. The protein is Large ribosomal subunit protein bL31 of Chlorobium phaeovibrioides (strain DSM 265 / 1930) (Prosthecochloris vibrioformis (strain DSM 265)).